A 114-amino-acid polypeptide reads, in one-letter code: UPF0342 protein PEPE_0673 (114 aa).

Belongs to the UPF0342 family.

This chain is UPF0342 protein PEPE_0673, found in Pediococcus pentosaceus (strain ATCC 25745 / CCUG 21536 / LMG 10740 / 183-1w).